A 442-amino-acid chain; its full sequence is DNA topoisomerase 6 subunit A3 (442 aa).

Positions 1 to 34 are disordered; it reads MSEKKRRGGAGAGAASGSASKKPRVSTAASYAES. Positions 91–224 constitute a Topo IIA-type catalytic domain; sequence QDSASVTSRI…LHVVASEKGV (134 aa). The active-site O-(5'-phospho-DNA)-tyrosine intermediate is the Tyr-185. Mg(2+)-binding residues include Glu-271 and Asp-323.

Belongs to the TOP6A family. In terms of assembly, homodimer. Heterotetramer of two TOP6A and two TOP6B subunits. Interacts with TOP6B. Mg(2+) serves as cofactor. As to expression, highly expressed in flowers before pollination. Expressed in roots and shoots.

It is found in the nucleus. It catalyses the reaction ATP-dependent breakage, passage and rejoining of double-stranded DNA.. Functionally, component of the DNA topoisomerase VI involved in chromatin organization and progression of endoreduplication cycles. Relaxes both positive and negative superturns and exhibits a strong decatenase activity. May be involved in cell proliferation and stress tolerance. The sequence is that of DNA topoisomerase 6 subunit A3 from Oryza sativa subsp. indica (Rice).